Consider the following 335-residue polypeptide: Leucine-rich repeat-containing protein 39 (335 aa).

Positions 10–47 (AVNAVKEVWEKRIKKLNEDLKREKEFQHKLVRIWEERV) form a coiled coil. 9 LRR repeats span residues 84-105 (QLQEWQLHRTGLLKIPEFIGRF), 107-128 (NLIVLDLSRNTISEIPPGIGLL), 130-151 (RLQELILSYNKIKTVPKELSNC), 153-176 (SLEKLELAVNRDICDLPQELSNLL), 177-197 (KLTHLDLSMNDFTTIPLAVLN), 200-221 (ALEWLDMGSNKLEQLPDTIERM), 223-244 (NLHTLWLQRNEITCLPQTISNM), 246-267 (NLGTLVLSNNKLQDIPVCMEEM), and 269-290 (NLRFVNFRDNPLKLKVSLPPSE).

Interacts with MYH7 (via C-terminus). Highly expressed in skeletal muscle and heart. Not detected in other tissues tested.

It is found in the cytoplasm. It localises to the myofibril. The protein localises to the sarcomere. Its subcellular location is the m line. Component of the sarcomeric M-band which plays a role in myocyte response to biomechanical stress. May regulate expression of other M-band proteins via an SRF-dependent pathway. Important for normal contractile function in heart. The sequence is that of Leucine-rich repeat-containing protein 39 (LRRC39) from Homo sapiens (Human).